Here is a 291-residue protein sequence, read N- to C-terminus: N-acetylmannosamine kinase (291 aa).

Residues 5–12 and 132–139 contribute to the ATP site; these read AIDIGGTK and GVGGGVVS. Positions 156, 166, 168, and 173 each coordinate Zn(2+).

It belongs to the ROK (NagC/XylR) family. NanK subfamily. In terms of assembly, homodimer.

It catalyses the reaction an N-acyl-D-mannosamine + ATP = an N-acyl-D-mannosamine 6-phosphate + ADP + H(+). The protein operates within amino-sugar metabolism; N-acetylneuraminate degradation; D-fructose 6-phosphate from N-acetylneuraminate: step 2/5. Its function is as follows. Catalyzes the phosphorylation of N-acetylmannosamine (ManNAc) to ManNAc-6-P. This Escherichia coli (strain SE11) protein is N-acetylmannosamine kinase.